A 729-amino-acid polypeptide reads, in one-letter code: E3 ubiquitin-protein ligase Trim36 (729 aa).

The RING-type; degenerate zinc-finger motif lies at 33–84 (CPACKELFTHPLILPCQHSVCHKCVKELLLSLDDSFNDVASDSSNQSSPRLR). 2 B box-type zinc fingers span residues 154 to 192 (AIMCDLCKPPPQESTKSCMDCSASYCNECFKIYHPWGTV) and 207 to 249 (PKVL…VTTM). Residues C212, H215, C235, and H241 each contribute to the Zn(2+) site. Positions 271-302 (ESQVKSQISELNLLMKETECNGERAKEEALAH) form a coiled coil. A COS domain is found at 356–413 (LKETDQSCFVQTAKQLHLRIQKATESLKSFRPAAQASFEDYVVNISKQTEVLGELSFF). In terms of domain architecture, Fibronectin type-III spans 416 to 511 (GIDIPEINEE…RELILHTPPA (96 aa)). The 215-residue stretch at 509–723 (PPAPVFSFLF…LEEAITAKYL (215 aa)) folds into the B30.2/SPRY domain. A disordered region spans residues 606–626 (RDAASPRYEQDSGHDSGSEDA). Positions 613 to 622 (YEQDSGHDSG) are enriched in basic and acidic residues.

It belongs to the TRIM/RBCC family. As to quaternary structure, interacts with CENPH. In terms of tissue distribution, expressed in testis. Strongly expressed in the neural tube region in 14.5 dpc embryos.

It localises to the cytoplasm. The protein localises to the cytoplasmic vesicle. Its subcellular location is the secretory vesicle. It is found in the acrosome. The protein resides in the cytoskeleton. It carries out the reaction S-ubiquitinyl-[E2 ubiquitin-conjugating enzyme]-L-cysteine + [acceptor protein]-L-lysine = [E2 ubiquitin-conjugating enzyme]-L-cysteine + N(6)-ubiquitinyl-[acceptor protein]-L-lysine.. Its function is as follows. E3 ubiquitin-protein ligase which mediates ubiquitination and subsequent proteasomal degradation of target proteins. Involved in chromosome segregation and cell cycle regulation. May play a role in the acrosome reaction and fertilization. In Mus musculus (Mouse), this protein is E3 ubiquitin-protein ligase Trim36 (Trim36).